Here is a 342-residue protein sequence, read N- to C-terminus: S-adenosylmethionine:tRNA ribosyltransferase-isomerase (342 aa).

The protein belongs to the QueA family. Monomer.

Its subcellular location is the cytoplasm. It carries out the reaction 7-aminomethyl-7-carbaguanosine(34) in tRNA + S-adenosyl-L-methionine = epoxyqueuosine(34) in tRNA + adenine + L-methionine + 2 H(+). Its pathway is tRNA modification; tRNA-queuosine biosynthesis. In terms of biological role, transfers and isomerizes the ribose moiety from AdoMet to the 7-aminomethyl group of 7-deazaguanine (preQ1-tRNA) to give epoxyqueuosine (oQ-tRNA). The polypeptide is S-adenosylmethionine:tRNA ribosyltransferase-isomerase (Streptococcus pyogenes serotype M12 (strain MGAS2096)).